The chain runs to 279 residues: RxLR effector protein Avh331 (279 aa).

Residues 1–20 (MMQWSAILIRTCFSGSGGEA) form the signal peptide. The short motif at 86 to 106 (RSLRSQATNVDDDANVSIENR) is the RxLR-dEER element. N-linked (GlcNAc...) asparagine glycosylation is present at Asn-100. The interval 129–147 (ANKLWLMADVDPKSAFKLL) is W1 motif. Residues 153–174 (GVRFIDNPKMLQWLKFTKAYLD) form a Y1 motif region. The tract at residues 178–208 (SGFGETSAHALLYEKIGGPDLSLLLLSLKDA) is l motif. Residues 222 to 240 (QFGMWHDARIEPEQLAQTV) form a W2 motif region. The interval 250 to 271 (PKNDPKLQVIDDYAKYHRKHRK) is Y2 motif.

This sequence belongs to the RxLR effector family.

The protein resides in the secreted. The protein localises to the host cell. Its function is as follows. Effector that suppresses the host mitogen-activated protein kinase (MAPK)-based plant defense activated by the Phytophthora elicitor to promote colonization of the Phytophthora pathogen. Neither directly inhibits MAPK kinase activity nor interacts with MAPK proteins but acts downstream by suppressing transcriptional activation of resistance marker genes such as FRK1, WRKY22 and WRKY29. Confers avirulence in the presence of resistance protein Rps1k in host. This chain is RxLR effector protein Avh331, found in Phytophthora sojae (strain P6497) (Soybean stem and root rot agent).